The following is a 535-amino-acid chain: Ribonuclease Y (535 aa).

The chain crosses the membrane as a helical span at residues 4–24 (IILAMVCALIGLIIGYVAISM). Residues 107-145 (TDRASSLDRKDENLSNKEKMLDSKEQSLTDKSRHINERE) form a disordered region. Positions 225–285 (TITTVHLPDD…IRREIARMTL (61 aa)) constitute a KH domain. The region spanning 351–444 (VLRHSVEVGK…VAAADALSSA (94 aa)) is the HD domain.

The protein belongs to the RNase Y family.

It localises to the cell membrane. In terms of biological role, endoribonuclease that initiates mRNA decay. This is Ribonuclease Y from Streptococcus agalactiae serotype Ia (strain ATCC 27591 / A909 / CDC SS700).